Consider the following 613-residue polypeptide: Ribosome-associated molecular chaperone SSB1 (613 aa).

The nucleotide binding domain (NBD) stretch occupies residues Met-1–Asp-391. Residues Thr-16–Tyr-18, Lys-73, Gly-205–Thr-207, Glu-271–Ser-278, and Gly-342 contribute to the ATP site. Residues Thr-392–Pro-402 are inter-domain linker. The interval Leu-403 to Arg-613 is substrate binding domain (SBD). The interval Thr-516–Thr-612 is lid domain (SBDalpha). Positions Ile-574–Leu-582 match the Nuclear export signal motif.

Belongs to the heat shock protein 70 family. Ssb-type Hsp70 subfamily. Binds to ribosomes. Binds close to the ribosomal tunnel exit via contacts with both ribosomal proteins and rRNA. Directly interacts with nascent polypeptides. This interaction is dependent on the ribosome-associated complex (RAC). Interacts with SSE1. Interacts with FES1.

It is found in the cytoplasm. The catalysed reaction is ATP + H2O = ADP + phosphate + H(+). Ribosome-bound, Hsp70-type chaperone that assists in the cotranslational folding of newly synthesized proteins in the cytosol. Stimulates folding by interacting with nascent chains, binding to short, largely hydrophobic sequences exposed by unfolded proteins, thereby stabilizing longer, more slowly translated, and aggregation-prone nascent polypeptides and domains that cannot fold stably until fully synthesized. The Hsp70-protein substrate interaction depends on ATP-binding and on allosteric regulation between the NBD and the SBD. The ATP-bound state is characterized by a fast exchange rate of substrate (low affinity state), while in the ADP-bound state exchange is much slower (high affinity state). During the Hsp70 cycle, the chaperone switches between the ATP-bound state (open conformation) and the ADP-bound state (closed conformation) by major conformational rearrangements involving mainly the lid domain. Ssb cooperates with a specific Hsp40/Hsp70 co-chaperone termed the ribosome-associated complex (RAC), which stimulates the ATPase activity of the ribosome-associated pool of Ssbs and switches it to the high affinity substrate binding state. Hsp110 chaperone SSE1 and FES1 act as nucleotide exchange factors that cause substrate release. This is Ribosome-associated molecular chaperone SSB1 (SSB1) from Candida albicans (strain WO-1) (Yeast).